A 56-amino-acid chain; its full sequence is Preprotein translocase subunit SecG (56 aa).

Residues 1–29 (MAKDKTTLPPTGAGLMRFFDEDTRAIKVS) are Cytoplasmic-facing. A helical transmembrane segment spans residues 30 to 51 (PKGVIAIVLVLIAFEVFLHLFG). Topologically, residues 52–56 (PSIFG) are extracellular.

This sequence belongs to the SEC61-beta family. Component of the protein translocase complex. Heterotrimer consisting of alpha (SecY), beta (SecG) and gamma (SecE) subunits. Can form oligomers of the heterotrimer.

It localises to the cell membrane. In terms of biological role, involved in protein export. The function of the beta subunit is unknown, but it may be involved in stabilization of the trimeric complex. The protein is Preprotein translocase subunit SecG of Thermococcus gammatolerans (strain DSM 15229 / JCM 11827 / EJ3).